The chain runs to 204 residues: Small ribosomal subunit protein uS4 (204 aa).

The region spanning 95–157 (RRLDNTVFRM…KGIHSIIRHN (63 aa)) is the S4 RNA-binding domain.

The protein belongs to the universal ribosomal protein uS4 family. As to quaternary structure, part of the 30S ribosomal subunit. Contacts protein S5. The interaction surface between S4 and S5 is involved in control of translational fidelity.

In terms of biological role, one of the primary rRNA binding proteins, it binds directly to 16S rRNA where it nucleates assembly of the body of the 30S subunit. Its function is as follows. With S5 and S12 plays an important role in translational accuracy. This chain is Small ribosomal subunit protein uS4, found in Treponema pallidum (strain Nichols).